Here is a 393-residue protein sequence, read N- to C-terminus: Eukaryotic translation initiation factor 5 (393 aa).

Glycine 28–threonine 35 is a binding site for GTP. Disordered stretches follow at residues lysine 144–aspartate 179 and glutamate 217–serine 247. The 163-residue stretch at glutamate 223–glutamate 385 folds into the W2 domain. Acidic residues predominate over residues glutamate 224–glutamate 233.

It belongs to the eIF-2-beta/eIF-5 family.

In terms of biological role, catalyzes the hydrolysis of GTP bound to the 40S ribosomal initiation complex (40S.mRNA.Met-tRNA[F].eIF-2.GTP) with the subsequent joining of a 60S ribosomal subunit resulting in the release of eIF-2 and the guanine nucleotide. The subsequent joining of a 60S ribosomal subunit results in the formation of a functional 80S initiation complex (80S.mRNA.Met-tRNA[F]). This Dictyostelium discoideum (Social amoeba) protein is Eukaryotic translation initiation factor 5 (eif5).